Reading from the N-terminus, the 280-residue chain is 4-diphosphocytidyl-2-C-methyl-D-erythritol kinase (280 aa).

K8 is an active-site residue. 91 to 101 is a binding site for ATP; sequence PVSAGLAGGST. Residue D133 is part of the active site.

The protein belongs to the GHMP kinase family. IspE subfamily.

It catalyses the reaction 4-CDP-2-C-methyl-D-erythritol + ATP = 4-CDP-2-C-methyl-D-erythritol 2-phosphate + ADP + H(+). Its pathway is isoprenoid biosynthesis; isopentenyl diphosphate biosynthesis via DXP pathway; isopentenyl diphosphate from 1-deoxy-D-xylulose 5-phosphate: step 3/6. In terms of biological role, catalyzes the phosphorylation of the position 2 hydroxy group of 4-diphosphocytidyl-2C-methyl-D-erythritol. This chain is 4-diphosphocytidyl-2-C-methyl-D-erythritol kinase, found in Clostridium botulinum (strain Alaska E43 / Type E3).